Here is a 190-residue protein sequence, read N- to C-terminus: Putative 3-methyladenine DNA glycosylase (190 aa).

It belongs to the DNA glycosylase MPG family.

The polypeptide is Putative 3-methyladenine DNA glycosylase (Rubrobacter xylanophilus (strain DSM 9941 / JCM 11954 / NBRC 16129 / PRD-1)).